Consider the following 809-residue polypeptide: MFKSLTKVNKVKPIGENNENEQSSRRNEEGSHPSNQSQQTTAQEENKGEEKSLKTKSTPVTSEEPHTNIQDKLSKKNSSGDLTTNPDPQNAAEPTGTVPEQKEMDPGKEGPNSPQNKPPAAPVINEYADAQLHNLVKRMRQRTALYKKKLVEGDLSSPEASPQTAKPTAVPPVKESDDKPTEHYYRLLWFKVKKMPLTEYLKRIKLPNSIDSYTDRLYLLWLLLVTLAYNWNCCFIPLRLVFPYQTADNIHYWLIADIICDIIYLYDMLFIQPRLQFVRGGDIIVDSNELRKHYRTSTKFQLDVASIIPFDICYLFFGFNPMFRANRMLKYTSFFEFNHHLESIMDKAYIYRVIRTTGYLLFILHINACVYYWASNYEGIGTTRWVYDGEGNEYLRCYYWAVRTLITIGGLPEPQTLFEIVFQLLNFFSGVFVFSSLIGQMRDVIGAATANQNYFRACMDDTIAYMNNYSIPKLVQKRVRTWYEYTWDSQRMLDESDLLKTLPTTVQLALAIDVNFSIISKVDLFKGCDTQMIYDMLLRLKSVLYLPGDFVCKKGEIGKEMYIIKHGEVQVLGGPDGTKVLVTLKAGSVFGEISLLAAGGGNRRTANVVAHGFANLLTLDKKTLQEILVHYPDSERILMKKARVLLKQKAKTAEATPPRKDLALLFPPKEETPKLFKTLLGGTGKASLARLLKLKREQAAQKKENSEGGEEEGKENEDKQKENEDKQKENEDKGKENEDKDKGREPEEKPLDRPECTASPIAVEEEPHSVRRTVLPRGTSRQSLIISMAPSAEGGEEVLTIEVKEKAKQ.

Disordered regions lie at residues 1–121 (MFKS…PPAA) and 153–178 (GDLS…ESDD). The Cytoplasmic portion of the chain corresponds to 1–218 (MFKSLTKVNK…SIDSYTDRLY (218 aa)). A compositionally biased stretch (basic and acidic residues) spans 22–31 (QSSRRNEEGS). Residues 32-43 (HPSNQSQQTTAQ) show a composition bias toward polar residues. Residues 44–53 (EENKGEEKSL) show a composition bias toward basic and acidic residues. The segment covering 55–88 (TKSTPVTSEEPHTNIQDKLSKKNSSGDLTTNPDP) has biased composition (polar residues). Residues 219–242 (LLWLLLVTLAYNWNCCFIPLRLVF) form a helical membrane-spanning segment. Topologically, residues 243–249 (PYQTADN) are extracellular. Residues 250 to 270 (IHYWLIADIICDIIYLYDMLF) traverse the membrane as a helical segment. At 271 to 299 (IQPRLQFVRGGDIIVDSNELRKHYRTSTK) the chain is on the cytoplasmic side. The helical transmembrane segment at 300-317 (FQLDVASIIPFDICYLFF) threads the bilayer. Over 318–320 (GFN) the chain is Extracellular. Residues 321–335 (PMFRANRMLKYTSFF) traverse the membrane as a helical segment. Over 336–348 (EFNHHLESIMDKA) the chain is Cytoplasmic. Positions 348–447 (AYIYRVIRTT…IGQMRDVIGA (100 aa)) are ion conduction pathway. Residues 349-371 (YIYRVIRTTGYLLFILHINACVY) traverse the membrane as a helical segment. Residues 372–393 (YWASNYEGIGTTRWVYDGEGNE) lie on the Extracellular side of the membrane. A run of 2 helical transmembrane segments spans residues 394–420 (YLRC…LFEI) and 421–445 (VFQL…RDVI). The tract at residues 407–410 (TIGG) is selectivity filter. The Cytoplasmic segment spans residues 446-809 (GAATANQNYF…TIEVKEKAKQ (364 aa)). The interval 450 to 526 (ANQNYFRACM…SIISKVDLFK (77 aa)) is C-linker. Positions 530 to 646 (TQMIYDMLLR…ILMKKARVLL (117 aa)) are cyclic nucleotide-binding domain. Glycine 591, glutamate 592, arginine 604, and threonine 605 together coordinate 3',5'-cyclic GMP. The tract at residues 698–776 (QAAQKKENSE…PHSVRRTVLP (79 aa)) is disordered. Positions 716–755 (NEDKQKENEDKQKENEDKGKENEDKDKGREPEEKPLDRPE) are enriched in basic and acidic residues.

This sequence belongs to the cyclic nucleotide-gated cation channel (TC 1.A.1.5) family. CNGB3 subfamily. As to quaternary structure, forms heterotetrameric channels composed of CNGA3 and CNGB3 subunits with 3:1 stoichiometry. Expressed specifically in the retina.

It is found in the cell membrane. It catalyses the reaction Ca(2+)(in) = Ca(2+)(out). It carries out the reaction Na(+)(in) = Na(+)(out). The catalysed reaction is K(+)(in) = K(+)(out). The enzyme catalyses NH4(+)(in) = NH4(+)(out). It catalyses the reaction Rb(+)(in) = Rb(+)(out). It carries out the reaction Li(+)(in) = Li(+)(out). The catalysed reaction is Cs(+)(in) = Cs(+)(out). Its function is as follows. Pore-forming subunit of the cone cyclic nucleotide-gated channel. Mediates cone photoresponses at bright light converting transient changes in intracellular cGMP levels into electrical signals. In the dark, cGMP levels are high and keep the channel open enabling a steady inward current carried by Na(+) and Ca(2+) ions that leads to membrane depolarization and neurotransmitter release from synaptic terminals. Upon photon absorption cGMP levels decline leading to channel closure and membrane hyperpolarization that ultimately slows neurotransmitter release and signals the presence of light, the end point of the phototransduction cascade. Conducts cGMP- and cAMP-gated ion currents, with permeability for monovalent and divalent cations. This chain is Cyclic nucleotide-gated channel beta-3, found in Homo sapiens (Human).